We begin with the raw amino-acid sequence, 361 residues long: Chorismate synthase (361 aa).

Positions 48 and 54 each coordinate NADP(+). FMN-binding positions include 125-127 (RSS), 238-239 (NA), glycine 278, 293-297 (KPTSS), and arginine 319.

Belongs to the chorismate synthase family. Homotetramer. Requires FMNH2 as cofactor.

It carries out the reaction 5-O-(1-carboxyvinyl)-3-phosphoshikimate = chorismate + phosphate. It participates in metabolic intermediate biosynthesis; chorismate biosynthesis; chorismate from D-erythrose 4-phosphate and phosphoenolpyruvate: step 7/7. Functionally, catalyzes the anti-1,4-elimination of the C-3 phosphate and the C-6 proR hydrogen from 5-enolpyruvylshikimate-3-phosphate (EPSP) to yield chorismate, which is the branch point compound that serves as the starting substrate for the three terminal pathways of aromatic amino acid biosynthesis. This reaction introduces a second double bond into the aromatic ring system. This Escherichia coli O157:H7 protein is Chorismate synthase.